The following is a 398-amino-acid chain: Flavohemoprotein (398 aa).

In terms of domain architecture, Globin spans Gln-9–Ala-147. Position 93 (His-93) interacts with heme b. Catalysis depends on charge relay system residues Tyr-103 and Glu-146. Residues Trp-155–Pro-398 are reductase. The FAD-binding FR-type domain maps to Arg-156–Asp-263. FAD is bound by residues Tyr-196 and Arg-212 to Ser-215. Gly-276 to Pro-281 is an NADP(+) binding site. Pro-395–Pro-398 lines the FAD pocket.

Belongs to the globin family. FAD is required as a cofactor. Requires heme b as cofactor.

Its subcellular location is the cytoplasm. It catalyses the reaction 2 nitric oxide + NADPH + 2 O2 = 2 nitrate + NADP(+) + H(+). The catalysed reaction is 2 nitric oxide + NADH + 2 O2 = 2 nitrate + NAD(+) + H(+). Inhibited by imidazoles. Functionally, nitric oxide dioxygenase involved in NO detoxification in an aerobic process, termed nitric oxide dioxygenase (NOD) reaction that utilizes O(2) and NAD(P)H to convert NO to nitrate, which protects the fungus from various noxious nitrogen compounds. Therefore, plays a central role in the inducible response to nitrosative stress. Plays a role in virulence since nitric oxide is generated by macrophages of the host immune system. The protein is Flavohemoprotein (YHB1) of Candida albicans (strain SC5314 / ATCC MYA-2876) (Yeast).